The sequence spans 309 residues: Dicarboxylate carrier SLC25A8 (309 aa).

Residues 1–16 lie on the Mitochondrial intermembrane side of the membrane; sequence MVGFKATDVPPTATVK. Solcar repeat units follow at residues 11 to 106, 114 to 203, and 212 to 297; these read PTAT…VKQF, ASIG…IKDA, and DDLP…LKRA. Residues 16 to 63 form an important for interaction with long-chain fatty acids region; the sequence is KFLGAGTAACIADLITFPLDTAKVRLQIQGESQGPVRATASAQYRGVM. The chain crosses the membrane as a helical span at residues 17 to 40; the sequence is FLGAGTAACIADLITFPLDTAKVR. Topologically, residues 41–77 are mitochondrial matrix; that stretch reads LQIQGESQGPVRATASAQYRGVMGTILTMVRTEGPRS. Residues 78–103 traverse the membrane as a helical segment; the sequence is LYNGLVAGLQRQMSFASVRIGLYDSV. Residues 104-119 lie on the Mitochondrial intermembrane side of the membrane; that stretch reads KQFYTKGSEHASIGSR. The helical transmembrane segment at 120 to 145 threads the bilayer; sequence LLAGSTTGALAVAVAQPTDVVKVRFQ. Topologically, residues 146–173 are mitochondrial matrix; it reads AQARAGGGRRYQSTVNAYKTIAREEGFR. Residues 174 to 199 form a helical membrane-spanning segment; that stretch reads GLWKGTSPNVARNAIVNCAELVTYDL. Residues 200-217 lie on the Mitochondrial intermembrane side of the membrane; the sequence is IKDALLKANLMTDDLPCH. Residues 218–242 form a helical membrane-spanning segment; sequence FTSAFGAGFCTTVIASPVDVVKTRY. Topologically, residues 243–268 are mitochondrial matrix; that stretch reads MNSALGQYSSAGHCALTMLQKEGPRA. A helical membrane pass occupies residues 269-294; it reads FYKGFMPSFLRLGSWNVVMFVTYEQL. Residues 278 to 285 are important for interaction with long-chain fatty acids; that stretch reads LRLGSWNV. Residues 295–309 are Mitochondrial intermembrane-facing; sequence KRALMAACTSREAPF.

It belongs to the mitochondrial carrier (TC 2.A.29) family. In terms of assembly, homotetramer. Adopts an asymmetrical dimer of dimers functional form. In terms of tissue distribution, widely expressed in adult human tissues, including tissues rich in macrophages. Most expressed in white adipose tissue and skeletal muscle.

It localises to the mitochondrion inner membrane. The enzyme catalyses L-aspartate(out) + phosphate(in) + H(+)(in) = L-aspartate(in) + phosphate(out) + H(+)(out). It catalyses the reaction oxaloacetate(out) + phosphate(in) + H(+)(in) = oxaloacetate(in) + phosphate(out) + H(+)(out). It carries out the reaction (S)-malate(out) + phosphate(in) + H(+)(in) = (S)-malate(in) + phosphate(out) + H(+)(out). The catalysed reaction is malonate(out) + phosphate(in) + H(+)(in) = malonate(in) + phosphate(out) + H(+)(out). The enzyme catalyses sulfate(out) + phosphate(in) + H(+)(in) = sulfate(in) + phosphate(out) + H(+)(out). It catalyses the reaction (S)-malate(out) = (S)-malate(in). It carries out the reaction L-aspartate(out) = L-aspartate(in). The catalysed reaction is phosphate(in) = phosphate(out). The enzyme catalyses chloride(in) = chloride(out). It catalyses the reaction H(+)(in) = H(+)(out). It carries out the reaction a long-chain fatty acid(out) = a long-chain fatty acid(in). Inhibited by pyridoxal- 5'-phosphate, bathophenanthroline, tannic acid, bromocresol purple, butylmalonate and phenylsuccinate. Proton conductance is activated by cardiolipin and long-chain free fatty acids and inhibited by purine nucleotides ATP and ADP. Chloride ion transporter activity is inhibited by long-chain free fatty acids. Its function is as follows. Antiporter that exports dicarboxylate intermediates of the Krebs cycle in exchange for phosphate plus a proton across the inner membrane of mitochondria, a process driven by mitochondrial motive force with an overall impact on glycolysis, glutaminolysis and glutathione-dependent redox balance. Continuous export of oxaloacetate and related four-carbon dicarboxylates from mitochondrial matrix into the cytosol negatively regulates the oxidation of acetyl-CoA substrates via the Krebs cycle, lowering the ATP/ADP ratio and reactive oxygen species (ROS) production. May mediate inducible proton entry into the mitochondrial matrix affecting ATP turnover as a protection mechanism against oxidative stress. The proton currents are most likely associated with fatty acid flipping across the inner membrane of mitochondria in a metabolic process regulated by free fatty acids and purine nucleotides. Regulates the use of glucose as a source of energy. Required for glucose-induced DRP1-dependent mitochondrial fission and neuron activation in the ventromedial nucleus of the hypothalamus (VMH). This mitochondrial adaptation mechanism modulates the VMH pool of glucose-excited neurons with an impact on systemic glucose homeostasis. Regulates ROS levels and metabolic reprogramming of macrophages during the resolution phase of inflammation. Attenuates ROS production in response to IL33 to preserve the integrity of the Krebs cycle required for persistent production of itaconate and subsequent GATA3-dependent differentiation of inflammation-resolving alternatively activated macrophages. Can unidirectionally transport anions including L-malate, L-aspartate, phosphate and chloride ions. Does not mediate adaptive thermogenesis. The sequence is that of Dicarboxylate carrier SLC25A8 (UCP2) from Homo sapiens (Human).